Reading from the N-terminus, the 264-residue chain is Tryptophan synthase alpha chain (264 aa).

Catalysis depends on proton acceptor residues Glu49 and Asp60.

This sequence belongs to the TrpA family. Tetramer of two alpha and two beta chains.

It catalyses the reaction (1S,2R)-1-C-(indol-3-yl)glycerol 3-phosphate + L-serine = D-glyceraldehyde 3-phosphate + L-tryptophan + H2O. It functions in the pathway amino-acid biosynthesis; L-tryptophan biosynthesis; L-tryptophan from chorismate: step 5/5. Its function is as follows. The alpha subunit is responsible for the aldol cleavage of indoleglycerol phosphate to indole and glyceraldehyde 3-phosphate. This chain is Tryptophan synthase alpha chain, found in Geobacter sulfurreducens (strain ATCC 51573 / DSM 12127 / PCA).